The sequence spans 385 residues: MRPSRRPRFRNILENRTIAAMTRSTIASFRAVSKHYGSHCALRDFNLELREGELLTLLGPSGCGKTTVLRLLAGLEIPDSGEIFLDGRTLAGVPPEARNVNTVFQSYALFPHLSVAENVAFGLRMKKLGSAEIRARTAEALRMVRLDGLGGHRPLQLSGGQQQRVALARALVNRPRVLLLDECLSALDYQLRREMQLELKGLQRQTGITFVFVTHDREEALSMSDRIAVMRTGRIEQLGPPRDIYERPANLFVAQFAGESNVLEATVTAITAPDSLIVELAGTPLTVRTDRRFRVGARLVLVLRPEDLHVHDDAAAEGGLAGHVLERTYRGVTLDTVIALDAGPRIKTSEFFREDTPALDHPPGQRVRVSWTPGWEIVLPHDPET.

An ABC transporter domain is found at 27–257 (ASFRAVSKHY…PANLFVAQFA (231 aa)). Residue 59–66 (GPSGCGKT) coordinates ATP.

This sequence belongs to the ABC transporter superfamily. Spermidine/putrescine importer (TC 3.A.1.11.1) family. The complex is composed of two ATP-binding proteins (PotA), two transmembrane proteins (PotB and PotC) and a solute-binding protein (PotD).

Its subcellular location is the cell inner membrane. The enzyme catalyses ATP + H2O + polyamine-[polyamine-binding protein]Side 1 = ADP + phosphate + polyamineSide 2 + [polyamine-binding protein]Side 1.. Functionally, part of the ABC transporter complex PotABCD involved in spermidine/putrescine import. Responsible for energy coupling to the transport system. In Methylococcus capsulatus (strain ATCC 33009 / NCIMB 11132 / Bath), this protein is Spermidine/putrescine import ATP-binding protein PotA.